A 633-amino-acid polypeptide reads, in one-letter code: Membrane protein insertase YidC (633 aa).

The next 6 helical transmembrane spans lie at 3 to 23 (KNTL…SWFN), 377 to 397 (FIHN…IILF), 453 to 473 (LPML…PSAI), 499 to 519 (IPII…LMTI), 541 to 561 (GMKA…NQYA), and 562 to 582 (SGLT…TLIF). The interval 612 to 633 (LEEAQRAQQETLRKQQEAKKKR) is disordered.

This sequence belongs to the OXA1/ALB3/YidC family. Type 1 subfamily. Interacts with the Sec translocase complex via SecD. Specifically interacts with transmembrane segments of nascent integral membrane proteins during membrane integration.

It is found in the cell inner membrane. In terms of biological role, required for the insertion and/or proper folding and/or complex formation of integral membrane proteins into the membrane. Involved in integration of membrane proteins that insert both dependently and independently of the Sec translocase complex, as well as at least some lipoproteins. Aids folding of multispanning membrane proteins. The chain is Membrane protein insertase YidC from Parabacteroides distasonis (strain ATCC 8503 / DSM 20701 / CIP 104284 / JCM 5825 / NCTC 11152).